The following is a 797-amino-acid chain: Xaa-Pro dipeptidyl-peptidase (797 aa).

Active-site charge relay system residues include Ser-370, Asp-490, and His-521.

It belongs to the peptidase S15 family. In terms of assembly, homodimer.

The protein localises to the cytoplasm. It carries out the reaction Hydrolyzes Xaa-Pro-|- bonds to release unblocked, N-terminal dipeptides from substrates including Ala-Pro-|-p-nitroanilide and (sequentially) Tyr-Pro-|-Phe-Pro-|-Gly-Pro-|-Ile.. Its function is as follows. Removes N-terminal dipeptides sequentially from polypeptides having unsubstituted N-termini provided that the penultimate residue is proline. The polypeptide is Xaa-Pro dipeptidyl-peptidase (Lacticaseibacillus rhamnosus (Lactobacillus rhamnosus)).